Reading from the N-terminus, the 631-residue chain is Eukaryotic translation initiation factor 2-alpha kinase 1 (631 aa).

Residues 1–34 (MQGGNSGVRKREEEGGGEGAVAAPPAIDFPAESS) are disordered. The short motif at 85-104 (LRSRQVFKLLCQTFIKMGLL) is the SIFI-degron element. The Protein kinase domain maps to 167–583 (FEEVAILGKG…AVQLLQSELF (417 aa)). Residues 173 to 181 (LGKGGYGRV) and Lys-196 contribute to the ATP site. Residues 260–301 (QEEDREQYDVKNDESSSSSIVFAEPTPEKGKRFGESDTENQN) form a disordered region. Phosphothreonine is present on Thr-285. A compositionally biased stretch (basic and acidic residues) spans 285–301 (TPEKGKRFGESDTENQN). Residues 410-415 (ACPYVM) form an HRM 1 repeat. Asp-442 (proton acceptor) is an active-site residue. Phosphothreonine; by autocatalysis occurs at positions 486 and 488. Position 493 is a phosphothreonine (Thr-493). The HRM 2 repeat unit spans residues 552–557 (RCPVQA).

The protein belongs to the protein kinase superfamily. Ser/Thr protein kinase family. GCN2 subfamily. In terms of assembly, synthesized in an inactive form that binds to the N-terminal domain of CDC37. Has to be associated with a multiprotein complex containing Hsp90, CDC37 and PPP5C for maturation and activation by autophosphorylation. The phosphatase PPP5C modulates this activation. Homodimer; homodimerizes in presence of heme, forming a disulfide-linked inactive homodimer. Interacts with DELE1; binds both to full-length DELE1 and processed form of DELE1 (S-DELE1) in response to stress, leading to activate its protein kinase activity and trigger the integrated stress response (ISR). Activated by autophosphorylation; phosphorylated predominantly on serine and threonine residues, but also on tyrosine residues. Autophosphorylation at Thr-488 is required for kinase activation. The active autophosphorylated form apparently is largely refractory to cellular heme fluctuations. In terms of processing, ubiquitinated and degraded by the SIFI complex once the mitochondrial stress has been resolved, thereby providing stress response silencing. Within the SIFI complex, UBR4 initiates ubiquitin chain that are further elongated or branched by KCMF1.

The protein resides in the cytoplasm. It catalyses the reaction L-seryl-[protein] + ATP = O-phospho-L-seryl-[protein] + ADP + H(+). The enzyme catalyses L-threonyl-[protein] + ATP = O-phospho-L-threonyl-[protein] + ADP + H(+). In normal conditions, the protein kinase activity is inhibited; inhibition is relieved by various stress conditions. Inhibited by heme: in presence of heme, forms a disulfide-linked inactive homodimer. Heme depletion relieves inhibition and stimulates kinase activity by autophosphorylation. Inhibited by the heme metabolites biliverdin and bilirubin. Induced by oxidative stress generated by arsenite treatment. Binding of nitric oxide (NO) to the heme iron in the N-terminal heme-binding domain activates the kinase activity, while binding of carbon monoxide (CO) suppresses kinase activity. Protein kinase activity is also activated upon binding to DELE1 in response to various stress, triggering the integrated stress response (ISR): activated by full-length DELE1 in response to iron deficiency, while it is activated by the processed form of DELE1 (S-DELE1) in response to mitochondrial stress. In terms of biological role, metabolic-stress sensing protein kinase that phosphorylates the alpha subunit of eukaryotic translation initiation factor 2 (EIF2S1/eIF-2-alpha) in response to various stress conditions. Key activator of the integrated stress response (ISR) required for adaptation to various stress, such as heme deficiency, oxidative stress, osmotic shock, mitochondrial dysfunction and heat shock. EIF2S1/eIF-2-alpha phosphorylation in response to stress converts EIF2S1/eIF-2-alpha in a global protein synthesis inhibitor, leading to a global attenuation of cap-dependent translation, while concomitantly initiating the preferential translation of ISR-specific mRNAs, such as the transcriptional activator ATF4, and hence allowing ATF4-mediated reprogramming. Acts as a key sensor of heme-deficiency: in normal conditions, binds hemin via a cysteine thiolate and histidine nitrogenous coordination, leading to inhibit the protein kinase activity. This binding occurs with moderate affinity, allowing it to sense the heme concentration within the cell: heme depletion relieves inhibition and stimulates kinase activity, activating the ISR. Thanks to this unique heme-sensing capacity, plays a crucial role to shut off protein synthesis during acute heme-deficient conditions. In red blood cells (RBCs), controls hemoglobin synthesis ensuring a coordinated regulation of the synthesis of its heme and globin moieties. It thereby plays an essential protective role for RBC survival in anemias of iron deficiency. Iron deficiency also triggers activation by full-length DELE1. Also activates the ISR in response to mitochondrial dysfunction: HRI/EIF2AK1 protein kinase activity is activated upon binding to the processed form of DELE1 (S-DELE1), thereby promoting the ATF4-mediated reprogramming. Also acts as an activator of mitophagy in response to mitochondrial damage: catalyzes phosphorylation of eIF-2-alpha (EIF2S1) following activation by S-DELE1, thereby promoting mitochondrial localization of EIF2S1, triggering PRKN-independent mitophagy. This Macaca fascicularis (Crab-eating macaque) protein is Eukaryotic translation initiation factor 2-alpha kinase 1.